Here is a 647-residue protein sequence, read N- to C-terminus: Type II methyltransferase M.FokI (647 aa).

2 consecutive short sequence motifs (adenine-specific methylase) follow at residues 218 to 221 (DPPY) and 548 to 551 (DPPY).

Belongs to the N(4)/N(6)-methyltransferase family. Monomer.

It catalyses the reaction a 2'-deoxyadenosine in DNA + S-adenosyl-L-methionine = an N(6)-methyl-2'-deoxyadenosine in DNA + S-adenosyl-L-homocysteine + H(+). Functionally, an alpha subtype methylase that recognizes the asymmetric double-stranded sequence 5'-GGATG-3', methylates A-3 of both strands, and protects the DNA from cleavage by the FokI endonuclease. The chain is Type II methyltransferase M.FokI from Planomicrobium okeanokoites (Planococcus okeanokoites).